The following is a 406-amino-acid chain: MEKHFVGSEIGQLRSVMLHRPNLSLKRLTPSNCQELLFDDVLSVERAGEEHDIFANTLRQQGIEVLLLTDLLTQTLDVADAKAWLLDTQISDYRLGPTFAADIRAWLADMPHRELARHLSGGLTYGEIPASIKNMVVDTHDINDFIMKPLPNHLFTRDTSCWIYNGVSINPMAKPARQRETNNLRAIYRWHPQFAGGDFIKYFGDEDINYDHATLEGGDVLVIGRGAVLIGMSERTTPQGVEFLAQALFKHRQAERVIAVELPKHRSCMHLDTVMTHIDIDTFSVYPEVVRPDVQCWTLTPDGRGGLKRTQESTLVHALETALGIDQVRLITTGGDAFEAEREQWNDANNVLTLRPGVVVGYERNIWTNEKYDKAGITVLPIPGDELGRGRGGARCMSCPLERDGI.

The active-site Amidino-cysteine intermediate is the Cys-396.

It belongs to the arginine deiminase family.

It localises to the cytoplasm. The catalysed reaction is L-arginine + H2O = L-citrulline + NH4(+). It functions in the pathway amino-acid degradation; L-arginine degradation via ADI pathway; carbamoyl phosphate from L-arginine: step 1/2. This Salmonella typhimurium (strain LT2 / SGSC1412 / ATCC 700720) protein is Arginine deiminase.